Reading from the N-terminus, the 327-residue chain is GTPase Obg (327 aa).

The Obg domain occupies 2–160; the sequence is HLFKDSLNLI…LNLRLELSLI (159 aa). Residues 161–326 enclose the OBG-type G domain; that stretch reads ADVGLVGLPN…LVSEFFSLAK (166 aa). GTP-binding positions include 167 to 174, 192 to 196, 213 to 216, 280 to 283, and 307 to 309; these read GLPNAGKS, FTTKI, DLPG, SKLD, and SIY. 2 residues coordinate Mg(2+): Ser-174 and Thr-194.

It belongs to the TRAFAC class OBG-HflX-like GTPase superfamily. OBG GTPase family. Monomer. Mg(2+) serves as cofactor.

The protein localises to the cytoplasm. In terms of biological role, an essential GTPase which binds GTP, GDP and possibly (p)ppGpp with moderate affinity, with high nucleotide exchange rates and a fairly low GTP hydrolysis rate. Plays a role in control of the cell cycle, stress response, ribosome biogenesis and in those bacteria that undergo differentiation, in morphogenesis control. The protein is GTPase Obg of Borrelia recurrentis (strain A1).